Consider the following 387-residue polypeptide: Galactokinase (387 aa).

Glutamate 33 to aspartate 36 is a binding site for substrate. ATP is bound by residues serine 67 and glycine 124 to serine 130. The Mg(2+) site is built by serine 130 and glutamate 162. Aspartate 174 functions as the Proton acceptor in the catalytic mechanism. A substrate-binding site is contributed by tyrosine 224.

This sequence belongs to the GHMP kinase family. GalK subfamily.

It is found in the cytoplasm. It carries out the reaction alpha-D-galactose + ATP = alpha-D-galactose 1-phosphate + ADP + H(+). It participates in carbohydrate metabolism; galactose metabolism. Functionally, catalyzes the transfer of the gamma-phosphate of ATP to D-galactose to form alpha-D-galactose-1-phosphate (Gal-1-P). The chain is Galactokinase from Clostridium perfringens (strain ATCC 13124 / DSM 756 / JCM 1290 / NCIMB 6125 / NCTC 8237 / Type A).